The primary structure comprises 237 residues: Uridylate kinase (237 aa).

12–15 (KLSG) lines the ATP pocket. The tract at residues 20-25 (GEDGLG) is involved in allosteric activation by GTP. Glycine 54 provides a ligand contact to UMP. The ATP site is built by glycine 55 and arginine 59. Residues aspartate 74 and 135-142 (TGNPFFTT) contribute to the UMP site. 3 residues coordinate ATP: threonine 162, tyrosine 168, and aspartate 171.

This sequence belongs to the UMP kinase family. In terms of assembly, homohexamer.

The protein localises to the cytoplasm. The enzyme catalyses UMP + ATP = UDP + ADP. It functions in the pathway pyrimidine metabolism; CTP biosynthesis via de novo pathway; UDP from UMP (UMPK route): step 1/1. Allosterically activated by GTP. Inhibited by UTP. In terms of biological role, catalyzes the reversible phosphorylation of UMP to UDP. This is Uridylate kinase from Haemophilus influenzae (strain 86-028NP).